The chain runs to 650 residues: Chaperone protein DnaK (650 aa).

A Phosphothreonine; by autocatalysis modification is found at T200. A disordered region spans residues Q613–Q634.

The protein belongs to the heat shock protein 70 family.

Its function is as follows. Acts as a chaperone. The protein is Chaperone protein DnaK of Burkholderia vietnamiensis (strain G4 / LMG 22486) (Burkholderia cepacia (strain R1808)).